The chain runs to 97 residues: Protein RnfH (97 aa).

Belongs to the UPF0125 (RnfH) family.

This Paramagnetospirillum magneticum (strain ATCC 700264 / AMB-1) (Magnetospirillum magneticum) protein is Protein RnfH.